The sequence spans 875 residues: E3 SUMO-protein ligase SIZ1 (875 aa).

Positions Leu12–Leu46 constitute an SAP domain. A PHD-type zinc finger spans residues Lys114–Ser169. The segment at Ser349–Asn430 adopts an SP-RING-type zinc-finger fold. Zn(2+)-binding residues include Cys380, His382, Cys403, and Cys406. The disordered stretch occupies residues Gly796 to Gly820. Residues Val808 to Thr819 are compositionally biased toward polar residues.

The protein belongs to the PIAS family.

The protein localises to the nucleus. It functions in the pathway protein modification; protein sumoylation. Functionally, probable SUMO E3 ligase that may regulate Pi starvation responses. The polypeptide is E3 SUMO-protein ligase SIZ1 (SIZ1) (Oryza sativa subsp. japonica (Rice)).